We begin with the raw amino-acid sequence, 2896 residues long: Protein PRRC2C (2896 aa).

At Lys27 the chain carries N6-acetyllysine. Residues 28–212 (GKSLETQKTT…STAGTSEQND (185 aa)) are disordered. Positions 88–97 (QEQHEEEKTP) are enriched in basic and acidic residues. Over residues 105-119 (KPGVAAPPEVAPAPK) the composition is skewed to low complexity. Residues 134–144 (QVNSQFQQEFP) show a composition bias toward polar residues. Residues 151–160 (DQEKKEKETN) are compositionally biased toward basic and acidic residues. A phosphoserine mark is found at Ser187 and Ser191. A compositionally biased stretch (polar residues) spans 201 to 211 (DESTAGTSEQN). Position 242 is an asymmetric dimethylarginine; alternate (Arg242). Arg242 bears the Omega-N-methylarginine; alternate mark. Residues Arg255 and Arg266 each carry the asymmetric dimethylarginine modification. 2 disordered regions span residues 264-729 (PMRF…QHLA) and 750-788 (SGRP…SFEH). 2 positions are modified to omega-N-methylarginine: Arg279 and Arg281. Basic and acidic residues predominate over residues 301-310 (ELKELDKFDN). At Ser335 the chain carries Phosphoserine. Residues 341-358 (GSNSPKENNSEDQGSKAS) are compositionally biased toward polar residues. The segment covering 359–368 (ENNENKKETD) has biased composition (basic and acidic residues). Residues 370–381 (VSNTKSSSQIPA) show a composition bias toward polar residues. Lys392 bears the N6-acetyllysine mark. Phosphoserine occurs at positions 395 and 500. Residues 395–405 (SFNQERGTSSH) are compositionally biased toward polar residues. Over residues 465–648 (RREEEERRME…EATPVVHETE (184 aa)) the composition is skewed to basic and acidic residues. Over residues 676–708 (QRQQEQMKQQQWQQQQQQGVLPQTVPSQPSSST) the composition is skewed to low complexity. The segment covering 759–769 (PIHPGMIPPKP) has biased composition (pro residues). 3 positions are modified to phosphoserine: Ser779, Ser785, and Ser801. A disordered region spans residues 804 to 1118 (RMLWGSDPYP…PVSTVQVEPA (315 aa)). Composition is skewed to basic and acidic residues over residues 825 to 836 (ATEEPEDVRSEA), 852 to 867 (NQLE…RESS), and 878 to 888 (SVEDVRPHHTD). Phosphoserine occurs at positions 867, 878, 920, and 929. 3 stretches are compositionally biased toward basic and acidic residues: residues 954–993 (IDSK…ETRW), 1000–1010 (NRREEVNDRPV), and 1020–1058 (VLRD…KKDL). A coiled-coil region spans residues 1020 to 1046 (VLRDMKEEREQRKEKEGEKAEKVTEKV). Residues 1059–1081 (PPPPPPPQPPAPIQPQSVPPPIQ) are compositionally biased toward pro residues. A compositionally biased stretch (polar residues) spans 1089-1100 (STETATLAQKPS). A Glycyl lysine isopeptide (Lys-Gly) (interchain with G-Cter in SUMO2) cross-link involves residue Lys1133. Composition is skewed to basic and acidic residues over residues 1143–1163 (SKDL…KKES), 1170–1180 (YWKEARERDWF), 1214–1230 (HTRD…RAEH), and 1237–1248 (RQREESETRSES). Disordered regions lie at residues 1143–1647 (SKDL…DALS), 1670–1785 (EDPQ…SAPV), 1905–1991 (APAS…TAEL), 2005–2164 (ISKK…VSEM), 2218–2238 (LPNT…SLTS), 2257–2290 (WENS…GPST), 2317–2341 (GAGT…NICK), and 2668–2701 (DIKP…QSSK). 5 positions are modified to phosphoserine: Ser1242, Ser1246, Ser1248, Ser1249, and Ser1263. Composition is skewed to basic and acidic residues over residues 1261–1297 (RGSE…ENKK), 1305–1330 (FKPD…DKAK), 1381–1418 (EVPK…PARE), and 1429–1446 (PRQD…REAA). Thr1265 and Thr1267 each carry phosphothreonine. Polar residues-rich tracts occupy residues 1457-1469 (TNGT…QEPV) and 1477-1491 (GNKT…SSDQ). A compositionally biased stretch (basic and acidic residues) spans 1505 to 1517 (FNERRERDEKKNA). At Ser1544 the chain carries Phosphoserine. Basic and acidic residues-rich tracts occupy residues 1620-1634 (NSKD…DPKP) and 1692-1704 (RLQD…KEEQ). A coiled-coil region spans residues 1682–1717 (TEVVSKKQQKRLQDEERRKKEEQVIQVWNKKNANEK). Residues 1742-1785 (SSASVPPLASAPLPPSTSASVPASTSAPLPATLTPVPASTSAPV) are compositionally biased toward low complexity. A compositionally biased stretch (pro residues) spans 1913-1929 (APAPTPVSAPNPAPPAP). The segment covering 1943-1952 (PLQTTSQSSK) has biased composition (low complexity). Thr1965 is modified (phosphothreonine). Over residues 1976–1986 (KSIQTPQSHGT) the composition is skewed to polar residues. Residues Ser1983 and Ser2013 each carry the phosphoserine modification. Polar residues predominate over residues 2019 to 2035 (SVSAWNKPLTSFGSAPS). Positions 2075–2088 (KSADKIPEPKEQRQ) are enriched in basic and acidic residues. At Ser2105 the chain carries Phosphoserine. The span at 2108–2132 (ENKEHKPGPIGKERSLKNRKVKDAQ) shows a compositional bias: basic and acidic residues. Ser2143 is modified (phosphoserine). The segment covering 2257 to 2267 (WENSPNVREKG) has biased composition (basic and acidic residues). Ser2260 carries the phosphoserine modification. Residues 2269 to 2290 (PVTSTAPPIATGVSSSASGPST) show a composition bias toward polar residues. The segment covering 2320-2334 (TYTTSSLSTKSTTTS) has biased composition (low complexity). Phosphothreonine is present on residues Thr2673 and Thr2682. Residues 2679 to 2701 (RSTTPTSSPFRATSTSPNSQSSK) are compositionally biased toward polar residues. Ser2686 and Ser2694 each carry phosphoserine. At Arg2814 the chain carries Omega-N-methylarginine. Position 2823 is an asymmetric dimethylarginine; alternate (Arg2823). An Omega-N-methylarginine; alternate modification is found at Arg2823. Over residues 2824-2833 (FFSEQQQSKQ) the composition is skewed to polar residues. Residues 2824-2896 (FFSEQQQSKQ…QAIKTEETKS (73 aa)) are disordered.

Overexpressed in bladder cancer.

It is found in the cytoplasm. The protein resides in the stress granule. Its function is as follows. Required for efficient formation of stress granules. The sequence is that of Protein PRRC2C from Homo sapiens (Human).